Reading from the N-terminus, the 301-residue chain is tRNA uridine(34) hydroxylase (301 aa).

The 95-residue stretch at 120–214 folds into the Rhodanese domain; it reads SAPDVAVIDT…YLEDVPEDQS (95 aa). Cysteine 174 serves as the catalytic Cysteine persulfide intermediate.

The protein belongs to the TrhO family.

It catalyses the reaction uridine(34) in tRNA + AH2 + O2 = 5-hydroxyuridine(34) in tRNA + A + H2O. Catalyzes oxygen-dependent 5-hydroxyuridine (ho5U) modification at position 34 in tRNAs. In Jannaschia sp. (strain CCS1), this protein is tRNA uridine(34) hydroxylase.